A 66-amino-acid chain; its full sequence is Potassium channel toxin alpha-KTx (66 aa).

Residues 1-21 (MNTKVVLIMLMITSVILVVEA) form the signal peptide. Cystine bridges form between Cys-29–Cys-49, Cys-35–Cys-59, Cys-39–Cys-61, and Cys-44–Cys-64.

It belongs to the short scorpion toxin superfamily. Potassium channel inhibitor family. As to expression, expressed by the venom gland.

It localises to the secreted. In terms of biological role, blocks voltage-gated potassium channels. This chain is Potassium channel toxin alpha-KTx, found in Hoffmannihadrurus gertschi (Scorpion).